A 128-amino-acid polypeptide reads, in one-letter code: Small ribosomal subunit protein eS8 (128 aa).

The protein belongs to the eukaryotic ribosomal protein eS8 family. As to quaternary structure, part of the 30S ribosomal subunit.

This Methanococcus maripaludis (strain C5 / ATCC BAA-1333) protein is Small ribosomal subunit protein eS8.